Consider the following 236-residue polypeptide: Cell division protein FtsQ (236 aa).

The Cytoplasmic portion of the chain corresponds to 1–14; it reads MWDNHQALNQVADW. A helical membrane pass occupies residues 15–37; the sequence is LFTLAGLTTIYLMVQWTIHLPLL. Positions 37–111 constitute a POTRA domain; the sequence is LPLKEVHIRS…NGLDVVVEEH (75 aa). Residues 38 to 236 are Periplasmic-facing; sequence PLKEVHIRSN…VSGFAARGTR (199 aa).

It belongs to the FtsQ/DivIB family. FtsQ subfamily. As to quaternary structure, part of a complex composed of FtsB, FtsL and FtsQ.

Its subcellular location is the cell inner membrane. Its function is as follows. Essential cell division protein. May link together the upstream cell division proteins, which are predominantly cytoplasmic, with the downstream cell division proteins, which are predominantly periplasmic. May control correct divisome assembly. The protein is Cell division protein FtsQ of Nitrosospira multiformis (strain ATCC 25196 / NCIMB 11849 / C 71).